A 231-amino-acid polypeptide reads, in one-letter code: ATP phosphoribosyltransferase (231 aa).

This sequence belongs to the ATP phosphoribosyltransferase family. Short subfamily. In terms of assembly, heteromultimer composed of HisG and HisZ subunits.

Its subcellular location is the cytoplasm. The catalysed reaction is 1-(5-phospho-beta-D-ribosyl)-ATP + diphosphate = 5-phospho-alpha-D-ribose 1-diphosphate + ATP. Its pathway is amino-acid biosynthesis; L-histidine biosynthesis; L-histidine from 5-phospho-alpha-D-ribose 1-diphosphate: step 1/9. In terms of biological role, catalyzes the condensation of ATP and 5-phosphoribose 1-diphosphate to form N'-(5'-phosphoribosyl)-ATP (PR-ATP). Has a crucial role in the pathway because the rate of histidine biosynthesis seems to be controlled primarily by regulation of HisG enzymatic activity. This chain is ATP phosphoribosyltransferase, found in Brucella suis (strain ATCC 23445 / NCTC 10510).